Here is a 345-residue protein sequence, read N- to C-terminus: Uroporphyrinogen decarboxylase (345 aa).

Substrate is bound by residues 28–32 (RQAGR), Asp77, Tyr152, Ser207, and His321.

This sequence belongs to the uroporphyrinogen decarboxylase family. In terms of assembly, homodimer.

Its subcellular location is the cytoplasm. It catalyses the reaction uroporphyrinogen III + 4 H(+) = coproporphyrinogen III + 4 CO2. Its pathway is porphyrin-containing compound metabolism; protoporphyrin-IX biosynthesis; coproporphyrinogen-III from 5-aminolevulinate: step 4/4. In terms of biological role, catalyzes the decarboxylation of four acetate groups of uroporphyrinogen-III to yield coproporphyrinogen-III. The protein is Uroporphyrinogen decarboxylase of Arthrobacter sp. (strain FB24).